The sequence spans 294 residues: Probable WRKY transcription factor 70 (294 aa).

The interval 72-94 (SQNASCDNDGKFEDSGDSRKRLG) is disordered. Positions 79–91 (NDGKFEDSGDSRK) are enriched in basic and acidic residues. Positions 90–97 (RKRLGPVK) match the Nuclear localization signal motif. A DNA-binding region (WRKY) is located at residues 114 to 182 (IESTILEDAF…YIGNHTCNTN (69 aa)). The disordered stretch occupies residues 201 to 229 (SEDHKSPSLSTSMKEEDNPHRHHGSSTEN).

This sequence belongs to the WRKY group III family. As to quaternary structure, interacts with WRKY30. Binds to BZR2/BES1 to cooperatively regulate the expression of target genes. Binds to unmodified (i.e. not sumoylated) NPR1. Phosphorylated and destabilized by ASK7/BIN2. In terms of tissue distribution, expressed in leaves and flowers.

The protein resides in the nucleus. In terms of biological role, transcription factor involved in senescence, biotic and abiotic stress responses by modulating various phytohormones signaling pathways. Interacts specifically with the W box (5'-(T)TGAC[CT]-3'), a frequently occurring elicitor-responsive cis-acting element. Binds to the 5'-[CT]GACTTTT-3' motif in promoters of target genes to induce their expression. Binding to the W-box element of PR-1 promoter is mediated by not-sumoylated NPR1 in the absence of salicylic acid. Plays an important but not indispensable role in jasmonate and salicylic acid signaling. Positively regulates the salicylic acid (SA)-mediated signal pathway, but negatively the jasmonic acid (JA)-mediated signal pathway, thus determining the balance between these mutually antagonistic pathways. Together with WRKY46, WRKY53 and WRKY54, prevents defense response to the necrotrophic pathogens P.carotovorum and B.cinerea, but promotes defense responses (including SA-induced pathogenesis-related (PR) genes expression) against biotrophic/hemibiotrophic SA-monitored pathogens (e.g. P.syringae, E.carotovora subsp. carotovora SCC3193 and E.cichoracearum), probably by regulating negatively the JA/ET and positively the SA signaling pathways. Contributes to the suppression of jasmonic acid (MeJA)-induced expression of JA-responsive genes (e.g. PDF1.2). Promotes susceptibility to JA-monitored pathogens (e.g. A.brassicicola), probably by facilitating SA-controlled suppression of JA-mediated defense. Represses the biosynthesis of the phytoalexin camalexin and indol-3-ylmethyl glucosinolate (IGS). Represses both SA and JA/ethylene (ET) mediated defense marker genes expression. Negative regulator of SA biosynthesis. Negative regulator of EDS1-dependent defense against E.amylovora. Required for RPP4-mediated disease resistance and basal defense against H.parasitica, probably via late up-regulation (LURP) of resistance genes (e.g. CML10/CaBP22 and LURP1). Probably involved in defense responses toward insects (e.g. P.xylostella and B.brassicae). Together with WRKY54, negative regulator of developmental senescence, probably via the regulation of several senescence-associated markers genes. Together with WRKY46 and WRKY54, promotes brassinosteroid (BR)-regulated plant growth but prevent drought response by modulating gene expression. In collaboration with WRKY54, prevents stomatal closure and, consequently, osmotic stress tolerance. Regulates rhizobacterium B.cereus AR156-induced systemic resistance (ISR) to P.syringae pv. tomato DC3000. This chain is Probable WRKY transcription factor 70, found in Arabidopsis thaliana (Mouse-ear cress).